A 188-amino-acid polypeptide reads, in one-letter code: dTTP/UTP pyrophosphatase (188 aa).

Catalysis depends on Asp70, which acts as the Proton acceptor.

Belongs to the Maf family. YhdE subfamily. A divalent metal cation is required as a cofactor.

The protein resides in the cytoplasm. The catalysed reaction is dTTP + H2O = dTMP + diphosphate + H(+). It carries out the reaction UTP + H2O = UMP + diphosphate + H(+). In terms of biological role, nucleoside triphosphate pyrophosphatase that hydrolyzes dTTP and UTP. May have a dual role in cell division arrest and in preventing the incorporation of modified nucleotides into cellular nucleic acids. The protein is dTTP/UTP pyrophosphatase of Clostridium botulinum (strain Alaska E43 / Type E3).